A 578-amino-acid polypeptide reads, in one-letter code: Probable methylcrotonoyl-CoA carboxylase beta chain, mitochondrial (578 aa).

The N-terminal 29 residues, 1–29, are a transit peptide targeting the mitochondrion; that stretch reads MIRLNWLFRSSSVLLRSQVRLLHVGDANV. The CoA carboxyltransferase N-terminal domain occupies 48–305; that stretch reads MASLVGDLRN…SATNSYNDQL (258 aa). The interval 48–570 is carboxyltransferase; it reads MASLVGDLRN…KAALNNAGQE (523 aa). Residues 321–570 enclose the CoA carboxyltransferase C-terminal domain; the sequence is AVEEPRYDAE…KAALNNAGQE (250 aa). The acyl-CoA binding stretch occupies residues 355–388; sequence DGSRFTEFKKLYGETLVCGFAKLYGHTVGIVGNN.

It belongs to the AccD/PCCB family. As to expression, expressed in third instar larval ring gland (lateral and medial secretory cells and corpus cardiacum cells) and CNS.

The protein resides in the mitochondrion matrix. The catalysed reaction is 3-methylbut-2-enoyl-CoA + hydrogencarbonate + ATP = 3-methyl-(2E)-glutaconyl-CoA + ADP + phosphate + H(+). It participates in amino-acid degradation; L-leucine degradation; (S)-3-hydroxy-3-methylglutaryl-CoA from 3-isovaleryl-CoA: step 2/3. In terms of biological role, carboxyltransferase subunit of the 3-methylcrotonyl-CoA carboxylase, an enzyme that catalyzes the conversion of 3-methylcrotonyl-CoA to 3-methylglutaconyl-CoA, a critical step for leucine and isovaleric acid catabolism. Vital for adult survival. This Drosophila melanogaster (Fruit fly) protein is Probable methylcrotonoyl-CoA carboxylase beta chain, mitochondrial.